Reading from the N-terminus, the 290-residue chain is Ribonuclease 3 (290 aa).

An RNase III domain is found at 20 to 145 (YSCFYRILGF…FIGAIYLDRG (126 aa)). Glu62 serves as a coordination point for Mg(2+). Asp66 is a catalytic residue. Mg(2+) contacts are provided by Asn131 and Glu134. Glu134 is an active-site residue. Residues 173–242 (NFKSKLIEWS…AQMTLKKIKG (70 aa)) enclose the DRBM domain. Residues 254-290 (KTQNNVPAEDTTPESEMSLTAENQQIDEIISTEEISV) are disordered. Over residues 267–279 (ESEMSLTAENQQI) the composition is skewed to polar residues.

The protein belongs to the ribonuclease III family. As to quaternary structure, homodimer. Mg(2+) serves as cofactor.

It localises to the cytoplasm. The catalysed reaction is Endonucleolytic cleavage to 5'-phosphomonoester.. Digests double-stranded RNA. Involved in the processing of primary rRNA transcript to yield the immediate precursors to the large and small rRNAs (23S and 16S). Processes some mRNAs, and tRNAs when they are encoded in the rRNA operon. Processes pre-crRNA and tracrRNA of type II CRISPR loci if present in the organism. This chain is Ribonuclease 3, found in Bacteroides fragilis (strain YCH46).